The sequence spans 283 residues: Elongation factor Ts (283 aa).

Positions 80 to 83 (TDFV) are involved in Mg(2+) ion dislocation from EF-Tu.

The protein belongs to the EF-Ts family.

The protein resides in the cytoplasm. In terms of biological role, associates with the EF-Tu.GDP complex and induces the exchange of GDP to GTP. It remains bound to the aminoacyl-tRNA.EF-Tu.GTP complex up to the GTP hydrolysis stage on the ribosome. In Enterobacter sp. (strain 638), this protein is Elongation factor Ts.